We begin with the raw amino-acid sequence, 430 residues long: Serine--tRNA ligase (430 aa).

L-serine is bound at residue 231-233 (TSE). Position 262-264 (262-264 (RSE)) interacts with ATP. Glu285 is an L-serine binding site. 349–352 (EISS) contacts ATP. Ser385 contacts L-serine.

The protein belongs to the class-II aminoacyl-tRNA synthetase family. Type-1 seryl-tRNA synthetase subfamily. Homodimer. The tRNA molecule binds across the dimer.

The protein resides in the cytoplasm. It carries out the reaction tRNA(Ser) + L-serine + ATP = L-seryl-tRNA(Ser) + AMP + diphosphate + H(+). The enzyme catalyses tRNA(Sec) + L-serine + ATP = L-seryl-tRNA(Sec) + AMP + diphosphate + H(+). The protein operates within aminoacyl-tRNA biosynthesis; selenocysteinyl-tRNA(Sec) biosynthesis; L-seryl-tRNA(Sec) from L-serine and tRNA(Sec): step 1/1. Catalyzes the attachment of serine to tRNA(Ser). Is also able to aminoacylate tRNA(Sec) with serine, to form the misacylated tRNA L-seryl-tRNA(Sec), which will be further converted into selenocysteinyl-tRNA(Sec). This is Serine--tRNA ligase from Ruegeria pomeroyi (strain ATCC 700808 / DSM 15171 / DSS-3) (Silicibacter pomeroyi).